We begin with the raw amino-acid sequence, 585 residues long: MAGUK p55 subfamily member 3 (585 aa).

L27 domains are found at residues 6–60 (EDSG…ERQS) and 61–118 (PTPV…FDPV). The region spanning 137–218 (IVRLVKNKEP…SITLKIIPAT (82 aa)) is the PDZ domain. The 71-residue stretch at 226-296 (ESKVFMRALF…PSKQFQERRL (71 aa)) folds into the SH3 domain. Residue S307 is modified to Phosphoserine. In terms of domain architecture, Guanylate kinase-like spans 385 to 570 (SRLVVLIGSL…VCSQLRAVIE (186 aa)). The segment at 510 to 530 (KRKTPPVSPDSEDPATPLDEQ) is disordered.

It belongs to the MAGUK family. Interacts with HTR2C; this interaction stabilizes the receptor at the plasma membrane and prevents the desensitization of the HTR2C receptor-mediated calcium response. Interacts with HTR2A. Interacts with HTR4. Interacts (via PDZ domain) with CADM1 (via C-terminus)Interacts (via PDZ domain) with CADM1; this interaction connects CADM1 with DLG1. Interacts (via Guanylate kinase-like domain) with PALS1. Interacts with DLG1 (via N-terminus); this interaction connects CADM1 with DLG1 and links CADM1 with the regulatory subunit of phosphoinositide-3-kinase (PI3K) by forming a multiprotein complex and participates in cell spreading.

The protein localises to the apical cell membrane. Its subcellular location is the cell membrane. The protein resides in the cell junction. It is found in the adherens junction. Its function is as follows. Participates in cell spreading through the phosphoinositide-3-kinase (PI3K) pathway by connecting CADM1 to DLG1 and the regulatory subunit of phosphoinositide-3-kinase (PI3K). Stabilizes HTR2C at the plasma membrane and prevents its desensitization. May participates in the maintenance of adherens junctions. This chain is MAGUK p55 subfamily member 3, found in Rattus norvegicus (Rat).